A 215-amino-acid polypeptide reads, in one-letter code: Chaperone protein TorD (215 aa).

It belongs to the TorD/DmsD family. TorD subfamily.

Its subcellular location is the cytoplasm. Involved in the biogenesis of TorA. Acts on TorA before the insertion of the molybdenum cofactor and, as a result, probably favors a conformation of the apoenzyme that is competent for acquiring the cofactor. This is Chaperone protein TorD from Vibrio vulnificus (strain YJ016).